A 182-amino-acid polypeptide reads, in one-letter code: ATP synthase subunit delta (182 aa).

Belongs to the ATPase delta chain family. F-type ATPases have 2 components, F(1) - the catalytic core - and F(0) - the membrane proton channel. F(1) has five subunits: alpha(3), beta(3), gamma(1), delta(1), epsilon(1). F(0) has three main subunits: a(1), b(2) and c(10-14). The alpha and beta chains form an alternating ring which encloses part of the gamma chain. F(1) is attached to F(0) by a central stalk formed by the gamma and epsilon chains, while a peripheral stalk is formed by the delta and b chains.

The protein resides in the cell membrane. Its function is as follows. F(1)F(0) ATP synthase produces ATP from ADP in the presence of a proton or sodium gradient. F-type ATPases consist of two structural domains, F(1) containing the extramembraneous catalytic core and F(0) containing the membrane proton channel, linked together by a central stalk and a peripheral stalk. During catalysis, ATP synthesis in the catalytic domain of F(1) is coupled via a rotary mechanism of the central stalk subunits to proton translocation. This protein is part of the stalk that links CF(0) to CF(1). It either transmits conformational changes from CF(0) to CF(1) or is implicated in proton conduction. The polypeptide is ATP synthase subunit delta (Lachnoclostridium phytofermentans (strain ATCC 700394 / DSM 18823 / ISDg) (Clostridium phytofermentans)).